Reading from the N-terminus, the 188-residue chain is Protein-export protein SecB (188 aa).

Disordered stretches follow at residues 1–21 and 160–188; these read MADE…EQPK and RQKA…DTQQ. Residues 176-188 show a composition bias toward polar residues; the sequence is SDSTAAQGSDTQQ.

It belongs to the SecB family. As to quaternary structure, homotetramer, a dimer of dimers. One homotetramer interacts with 1 SecA dimer.

It is found in the cytoplasm. One of the proteins required for the normal export of preproteins out of the cell cytoplasm. It is a molecular chaperone that binds to a subset of precursor proteins, maintaining them in a translocation-competent state. It also specifically binds to its receptor SecA. This Alkalilimnicola ehrlichii (strain ATCC BAA-1101 / DSM 17681 / MLHE-1) protein is Protein-export protein SecB.